A 583-amino-acid chain; its full sequence is Probable cysteine--tRNA ligase, mitochondrial (583 aa).

C82 contributes to the Zn(2+) binding site. G83 is an L-cysteine binding site. The 'HIGH' region signature appears at P84–H94. T123 provides a ligand contact to L-cysteine. The 'KIIK' region motif lies at K128–N131. Positions 271, 296, and 300 each coordinate Zn(2+). H296 lines the L-cysteine pocket. A 'KMSKS' region motif is present at residues K337–S341. Residue K340 coordinates ATP.

This sequence belongs to the class-I aminoacyl-tRNA synthetase family. Requires Zn(2+) as cofactor.

The protein resides in the mitochondrion. It catalyses the reaction tRNA(Cys) + L-cysteine + ATP = L-cysteinyl-tRNA(Cys) + AMP + diphosphate. Functionally, mitochondrial cysteine-specific aminoacyl-tRNA synthetase that catalyzes the ATP-dependent ligation of cysteine to tRNA(Cys). In addition to its role as an aminoacyl-tRNA synthetase, has also cysteine persulfide synthase activity. Produces reactive persulfide species such as cysteine persulfide (CysSSH) from substrate cysteine and mediate direct incorporation of CysSSH into proteins during translations, resulting in protein persulfides and polysulfides. CysSSHs behave as potent antioxidants and cellular protectants. The polypeptide is Probable cysteine--tRNA ligase, mitochondrial (mcysS) (Dictyostelium discoideum (Social amoeba)).